Consider the following 407-residue polypeptide: UPF0761 membrane protein AZOSEA40600 (407 aa).

A run of 6 helical transmembrane segments spans residues S29–F49, G92–I112, L132–A152, F174–V194, G207–V227, and F239–G259.

It belongs to the UPF0761 family.

Its subcellular location is the cell inner membrane. This Aromatoleum aromaticum (strain DSM 19018 / LMG 30748 / EbN1) (Azoarcus sp. (strain EbN1)) protein is UPF0761 membrane protein AZOSEA40600.